The following is a 391-amino-acid chain: Formate-dependent phosphoribosylglycinamide formyltransferase (391 aa).

N(1)-(5-phospho-beta-D-ribosyl)glycinamide contacts are provided by residues 20–21 (EL) and Glu-80. ATP is bound by residues Arg-112, Lys-153, 158-163 (SSGKGQ), 193-196 (EGFV), and Glu-201. In terms of domain architecture, ATP-grasp spans 117-306 (RLAAETLGLP…EFALHVRAIL (190 aa)). Residues Glu-265 and Glu-277 each coordinate Mg(2+). N(1)-(5-phospho-beta-D-ribosyl)glycinamide-binding positions include Asp-284, Lys-354, and 361-362 (RR).

Belongs to the PurK/PurT family. Homodimer.

The enzyme catalyses N(1)-(5-phospho-beta-D-ribosyl)glycinamide + formate + ATP = N(2)-formyl-N(1)-(5-phospho-beta-D-ribosyl)glycinamide + ADP + phosphate + H(+). Its pathway is purine metabolism; IMP biosynthesis via de novo pathway; N(2)-formyl-N(1)-(5-phospho-D-ribosyl)glycinamide from N(1)-(5-phospho-D-ribosyl)glycinamide (formate route): step 1/1. Involved in the de novo purine biosynthesis. Catalyzes the transfer of formate to 5-phospho-ribosyl-glycinamide (GAR), producing 5-phospho-ribosyl-N-formylglycinamide (FGAR). Formate is provided by PurU via hydrolysis of 10-formyl-tetrahydrofolate. This Shewanella putrefaciens (strain CN-32 / ATCC BAA-453) protein is Formate-dependent phosphoribosylglycinamide formyltransferase.